The sequence spans 616 residues: Dihydroxy-acid dehydratase (616 aa).

Asp81 contributes to the Mg(2+) binding site. Cys122 provides a ligand contact to [2Fe-2S] cluster. 2 residues coordinate Mg(2+): Asp123 and Lys124. The residue at position 124 (Lys124) is an N6-carboxylysine. Cys195 contacts [2Fe-2S] cluster. Residue Glu491 participates in Mg(2+) binding. The active-site Proton acceptor is the Ser517.

It belongs to the IlvD/Edd family. As to quaternary structure, homodimer. It depends on [2Fe-2S] cluster as a cofactor. Mg(2+) serves as cofactor.

It catalyses the reaction (2R)-2,3-dihydroxy-3-methylbutanoate = 3-methyl-2-oxobutanoate + H2O. The catalysed reaction is (2R,3R)-2,3-dihydroxy-3-methylpentanoate = (S)-3-methyl-2-oxopentanoate + H2O. It participates in amino-acid biosynthesis; L-isoleucine biosynthesis; L-isoleucine from 2-oxobutanoate: step 3/4. It functions in the pathway amino-acid biosynthesis; L-valine biosynthesis; L-valine from pyruvate: step 3/4. Its function is as follows. Functions in the biosynthesis of branched-chain amino acids. Catalyzes the dehydration of (2R,3R)-2,3-dihydroxy-3-methylpentanoate (2,3-dihydroxy-3-methylvalerate) into 2-oxo-3-methylpentanoate (2-oxo-3-methylvalerate) and of (2R)-2,3-dihydroxy-3-methylbutanoate (2,3-dihydroxyisovalerate) into 2-oxo-3-methylbutanoate (2-oxoisovalerate), the penultimate precursor to L-isoleucine and L-valine, respectively. This Salmonella newport (strain SL254) protein is Dihydroxy-acid dehydratase.